The chain runs to 154 residues: 6,7-dimethyl-8-ribityllumazine synthase (154 aa).

Residues phenylalanine 22, 57-59, and 81-83 contribute to the 5-amino-6-(D-ribitylamino)uracil site; these read AYE and AVI. 86-87 contacts (2S)-2-hydroxy-3-oxobutyl phosphate; sequence GT. Histidine 89 functions as the Proton donor in the catalytic mechanism. Phenylalanine 114 serves as a coordination point for 5-amino-6-(D-ribitylamino)uracil. A (2S)-2-hydroxy-3-oxobutyl phosphate-binding site is contributed by arginine 128.

This sequence belongs to the DMRL synthase family. Forms an icosahedral capsid composed of 60 subunits, arranged as a dodecamer of pentamers.

It catalyses the reaction (2S)-2-hydroxy-3-oxobutyl phosphate + 5-amino-6-(D-ribitylamino)uracil = 6,7-dimethyl-8-(1-D-ribityl)lumazine + phosphate + 2 H2O + H(+). It participates in cofactor biosynthesis; riboflavin biosynthesis; riboflavin from 2-hydroxy-3-oxobutyl phosphate and 5-amino-6-(D-ribitylamino)uracil: step 1/2. Functionally, catalyzes the formation of 6,7-dimethyl-8-ribityllumazine by condensation of 5-amino-6-(D-ribitylamino)uracil with 3,4-dihydroxy-2-butanone 4-phosphate. This is the penultimate step in the biosynthesis of riboflavin. The sequence is that of 6,7-dimethyl-8-ribityllumazine synthase from Idiomarina loihiensis (strain ATCC BAA-735 / DSM 15497 / L2-TR).